Here is a 494-residue protein sequence, read N- to C-terminus: MTVATGDPSDEAAAHPGNPAEYDPDADHECCERVVINISGLRFETQLKTLSQFPDTLLGDPKKRMRYFDPLRNEYFFDRSRTSFDAILYFYQSGGRLRRPANVTLDIFSEEIRFYELGDEAIELFREDEGFVKEEERPLPDNEFQRQVWLLFEYPESSGPARIIAIISVMVILISIVSFCLETLPIFRNDDDEPHSVFDTNTNTTIYFTSTYFTDPFFILETLCIIWFSFEFLVRLFACPSKSGFFGNVMNIIDVVAIIPYFITLATELAEKPEDGQAGQQAMSLAILRVIRLVRVFRIFKLSRHSKGLQILGQTLKASMRELGLLIFFLFIGVILFSSAVYFAEADEPESQFESIPDAFWWAVVSMTTVGYGDMVPTTIGGKIVGSLCAIAGVLTIALPVPVIVSNFNYFYHRETEGEEQAQCLGPVTKEDSNEELKKSRSGSTISKSDYMEIQEGVNNTIEDIPEENLKTQANCTTLANTNYVNITKMLTDV.

The segment at M1–D25 is disordered. Residues M1–L124 form a tetramerization domain region. The Cytoplasmic segment spans residues M1–G159. A helical membrane pass occupies residues P160–L181. Residues E182–P216 are Extracellular-facing. N-linked (GlcNAc...) asparagine glycosylation occurs at N203. The chain crosses the membrane as a helical span at residues F217–A238. C239 is lipidated: S-palmitoyl cysteine. Residues C239–V249 lie on the Cytoplasmic side of the membrane. Residues M250 to A270 traverse the membrane as a helical segment. The Extracellular portion of the chain corresponds to E271 to S284. The helical; Voltage-sensor transmembrane segment at L285–H305 threads the bilayer. The Cytoplasmic segment spans residues S306 to M320. The S4-S5 linker stretch occupies residues K307–M320. Residues R321–Y342 form a helical membrane-spanning segment. Residues F343–I356 are Extracellular-facing. An intramembrane region (helical) is located at residues P357–T368. A Selectivity filter motif is present at residues T369–D374. Residues T369 to V376 lie within the membrane without spanning it. Topologically, residues P377 to K383 are extracellular. A helical membrane pass occupies residues I384–Y412. Over H413–V494 the chain is Cytoplasmic. The PDZ-binding signature appears at T492–V494.

The protein belongs to the potassium channel family. A (Shaker) (TC 1.A.1.2) subfamily. Kv1.2/KCNA2 sub-subfamily. In terms of assembly, homotetramer and heterotetramer with other family members. In terms of tissue distribution, expressed in oligodendrocytes.

The protein resides in the cell membrane. The enzyme catalyses K(+)(in) = K(+)(out). Its function is as follows. Voltage-gated potassium channel that mediates transmembrane potassium transport in excitable membranes, primarily in the brain and central nervous system. Prevents aberrant action potential firing and regulates neuronal output. Forms tetrameric potassium-selective channels through which potassium ions pass in accordance with their electrochemical gradient. The channel alternates between opened and closed conformations in response to the voltage difference across the membrane. Can form functional homotetrameric channels and heterotetrameric channels with other family members; the channels characteristics depend critically on the types of channel-forming alpha subunits that are present. Channel properties are modulated by cytoplasmic beta subunits that regulate the subcellular location of the alpha subunits. In vivo, membranes probably contain a mixture of heteromeric potassium channel complexes, making it difficult to assign currents observed in intact tissues to any particular potassium channel family member. Homotetrameric KCNA2 forms a delayed-rectifier potassium channel that opens in response to membrane depolarization, followed by slow spontaneous channel closure. Regulates neuronal excitability and plays a role as pacemaker in the regulation of neuronal action potentials. KCNA2-containing channels play a presynaptic role and prevent hyperexcitability and aberrant action potential firing. Response to toxins that are selective for KCNA2-containing potassium channels suggests that in Purkinje cells, dendritic subthreshold KCNA2-containing potassium channels prevent random spontaneous calcium spikes, suppressing dendritic hyperexcitability without hindering the generation of somatic action potentials, and thereby play an important role in motor coordination. Plays a role in the induction of long-term potentiation of neuron excitability in the CA3 layer of the hippocampus. This chain is Potassium voltage-gated channel subfamily A member 2 (kcna2), found in Oncorhynchus mykiss (Rainbow trout).